Consider the following 128-residue polypeptide: Small ribosomal subunit protein bS6 (128 aa).

It belongs to the bacterial ribosomal protein bS6 family.

Functionally, binds together with bS18 to 16S ribosomal RNA. The sequence is that of Small ribosomal subunit protein bS6 from Geotalea uraniireducens (strain Rf4) (Geobacter uraniireducens).